Consider the following 37-residue polypeptide: Cytochrome b6-f complex subunit 5 (37 aa).

The chain crosses the membrane as a helical span at residues 5 to 25 (LLCGIVLGLIPVTLLGLFVAA).

The protein belongs to the PetG family. The 4 large subunits of the cytochrome b6-f complex are cytochrome b6, subunit IV (17 kDa polypeptide, PetD), cytochrome f and the Rieske protein, while the 4 small subunits are PetG, PetL, PetM and PetN. The complex functions as a dimer.

The protein localises to the cellular thylakoid membrane. Its function is as follows. Component of the cytochrome b6-f complex, which mediates electron transfer between photosystem II (PSII) and photosystem I (PSI), cyclic electron flow around PSI, and state transitions. PetG is required for either the stability or assembly of the cytochrome b6-f complex. The protein is Cytochrome b6-f complex subunit 5 of Synechococcus sp. (strain WH7803).